The primary structure comprises 209 residues: Ribosomal RNA large subunit methyltransferase E (209 aa).

Residues glycine 63, tryptophan 65, aspartate 83, aspartate 99, and aspartate 124 each coordinate S-adenosyl-L-methionine. The active-site Proton acceptor is the lysine 164.

Belongs to the class I-like SAM-binding methyltransferase superfamily. RNA methyltransferase RlmE family.

The protein localises to the cytoplasm. The enzyme catalyses uridine(2552) in 23S rRNA + S-adenosyl-L-methionine = 2'-O-methyluridine(2552) in 23S rRNA + S-adenosyl-L-homocysteine + H(+). In terms of biological role, specifically methylates the uridine in position 2552 of 23S rRNA at the 2'-O position of the ribose in the fully assembled 50S ribosomal subunit. The chain is Ribosomal RNA large subunit methyltransferase E from Shewanella oneidensis (strain ATCC 700550 / JCM 31522 / CIP 106686 / LMG 19005 / NCIMB 14063 / MR-1).